Here is a 473-residue protein sequence, read N- to C-terminus: H(+)/Cl(-) exchange transporter ClcA (473 aa).

Topologically, residues 1–32 are cytoplasmic; that stretch reads MKTDTSTFLAQQIVRLRRRDQIRRLMQRDKTP. A helical transmembrane segment spans residues 33-69; it reads LAILFMAAVVGTLTGLVGVAFEKAVSWVQNMRIGALV. The Periplasmic portion of the chain corresponds to 70–76; it reads QVADHAF. The helical transmembrane segment at 77-100 threads the bilayer; the sequence is LLWPLAFILSALLAMVGYFLVRKF. A Selectivity filter part_1 motif is present at residues 106–110; sequence GSGIP. Ser-107 is a chloride binding site. The segment at residues 109 to 116 is an intramembrane region (helical); it reads IPEIEGAL. Residues 117–123 are Cytoplasmic-facing; sequence EELRPVR. Helical transmembrane passes span 124–141 and 148–166; these read WWRV…TLGA and EGPT…LDVF. The Selectivity filter part_2 motif lies at 146–150; that stretch reads GREGP. Residues 167-176 lie on the Cytoplasmic side of the membrane; sequence RMRSAEARHT. 2 intramembrane regions (helical) span residues 177–189 and 193–201; these read LLAT…LSAA and PLAGILFII. At 202 to 214 the chain is on the cytoplasmic side; the sequence is EEMRPQFRYNLIS. A helical membrane pass occupies residues 215 to 232; it reads IKAVFTGVIMSSIVFRIF. At 233-252 the chain is on the periplasmic side; that stretch reads NGEAPIIEVGKLSDAPVNTL. A helical transmembrane segment spans residues 253–281; the sequence is WLYLILGIIFGCVGPVFNSLVLRTQDMFQ. Over 282-287 the chain is Cytoplasmic; that stretch reads RFHGGE. Residues 288–309 traverse the membrane as a helical segment; the sequence is IKKWVLMGGAIGGLCGILGLIE. Residues 310 to 329 lie on the Periplasmic side of the membrane; that stretch reads PEAAGGGFNLIPIAAAGNFS. 2 helical membrane passes run 330–349 and 355–376; these read VGLL…LCFS and GIFA…MAAA. The short motif at 355-359 is the Selectivity filter part_3 element; that stretch reads GIFAP. Chloride is bound by residues Ile-356 and Phe-357. Residues 377-386 lie on the Periplasmic side of the membrane; it reads VLFPQYHLEA. An intramembrane region (helical) is located at residues 387-401; the sequence is GTFAIAGMGALMAAS. Residues 402-404 constitute an intramembrane region (note=Loop between two helices); the sequence is VRA. Residues 405-416 constitute an intramembrane region (helical); it reads PLTGIVLVLEMT. An intramembrane region (note=Loop between two helices) is located at residues 417 to 421; sequence DNYQL. The chain crosses the membrane as a helical span at residues 422-438; sequence ILPMIITCLGATLLAQF. The Cytoplasmic segment spans residues 439-473; it reads LGGKPLYSTILARTLAKQDAEQAAKNQNASAGENT. Tyr-445 contributes to the chloride binding site.

It belongs to the chloride channel (TC 2.A.49) family. ClcA subfamily. In terms of assembly, homodimer.

The protein resides in the cell inner membrane. The catalysed reaction is 2 chloride(in) + H(+)(out) = 2 chloride(out) + H(+)(in). Proton-coupled chloride transporter. Functions as antiport system and exchanges two chloride ions for 1 proton. Probably acts as an electrical shunt for an outwardly-directed proton pump that is linked to amino acid decarboxylation, as part of the extreme acid resistance (XAR) response. In Salmonella choleraesuis (strain SC-B67), this protein is H(+)/Cl(-) exchange transporter ClcA.